We begin with the raw amino-acid sequence, 661 residues long: UvrABC system protein B (661 aa).

In terms of domain architecture, Helicase ATP-binding spans 23 to 180; the sequence is EGLQKGYRIQ…THLARIGYER (158 aa). 36 to 43 serves as a coordination point for ATP; sequence GVTGSGKT. A Beta-hairpin motif is present at residues 89–112; that stretch reads YYDYYQPEAYIPTRDLYIEKNADI. In terms of domain architecture, Helicase C-terminal spans 426-592; the sequence is QIDDLVNEIA…TIIKPLDEEI (167 aa). One can recognise a UVR domain in the interval 620–655; sequence EEYIALLEEEMYKAASELRYEDAARLRDELFNIREK.

This sequence belongs to the UvrB family. Forms a heterotetramer with UvrA during the search for lesions. Interacts with UvrC in an incision complex.

It localises to the cytoplasm. The UvrABC repair system catalyzes the recognition and processing of DNA lesions. A damage recognition complex composed of 2 UvrA and 2 UvrB subunits scans DNA for abnormalities. Upon binding of the UvrA(2)B(2) complex to a putative damaged site, the DNA wraps around one UvrB monomer. DNA wrap is dependent on ATP binding by UvrB and probably causes local melting of the DNA helix, facilitating insertion of UvrB beta-hairpin between the DNA strands. Then UvrB probes one DNA strand for the presence of a lesion. If a lesion is found the UvrA subunits dissociate and the UvrB-DNA preincision complex is formed. This complex is subsequently bound by UvrC and the second UvrB is released. If no lesion is found, the DNA wraps around the other UvrB subunit that will check the other stand for damage. In Thermosipho africanus (strain TCF52B), this protein is UvrABC system protein B.